The following is a 122-amino-acid chain: uncharacterized protein (122 aa).

This is an uncharacterized protein from Homo sapiens (Human).